Here is a 90-residue protein sequence, read N- to C-terminus: DNA-directed RNA polymerase subunit omega (90 aa).

A disordered region spans residues 69–90; sequence RQEQQEQDAAELAAVSSITHNR.

It belongs to the RNA polymerase subunit omega family. In terms of assembly, the RNAP catalytic core consists of 2 alpha, 1 beta, 1 beta' and 1 omega subunit. When a sigma factor is associated with the core the holoenzyme is formed, which can initiate transcription.

The enzyme catalyses RNA(n) + a ribonucleoside 5'-triphosphate = RNA(n+1) + diphosphate. Promotes RNA polymerase assembly. Latches the N- and C-terminal regions of the beta' subunit thereby facilitating its interaction with the beta and alpha subunits. This Aliivibrio fischeri (strain ATCC 700601 / ES114) (Vibrio fischeri) protein is DNA-directed RNA polymerase subunit omega.